The following is a 594-amino-acid chain: Zinc finger protein 467 (594 aa).

Residues 1–70 (MRETLEALNS…HTEQAEAPCM (70 aa)) are disordered. K97 participates in a covalent cross-link: Glycyl lysine isopeptide (Lys-Gly) (interchain with G-Cter in SUMO2). 12 consecutive C2H2-type zinc fingers follow at residues 160–182 (YGCE…QRLH), 188–210 (CACP…QRSH), 216–238 (FPCS…LRTH), 244–266 (YPCA…QKTH), 272–294 (FPCT…QRIH), 300–322 (YQCT…QRVH), 355–377 (FACS…QSLH), 430–452 (FFCP…RRVH), 458–480 (FACA…SRAH), 486–508 (FACA…QAVH), 514–536 (HACA…QAIH), and 542–564 (FSCP…QRIH). Residues 313 to 350 (QHLVRHQRVHDAASRTRSSPDIPATPHPPTASLAPSPT) form a disordered region. A Glycyl lysine isopeptide (Lys-Gly) (interchain with G-Cter in SUMO2) cross-link involves residue K368.

This sequence belongs to the krueppel C2H2-type zinc-finger protein family. Interacts with STAT3. Enhances STAT3 activity by keeping it in the nucleus.

It is found in the nucleus. Functionally, transcription factor that promotes adipocyte differentiation and suppresses osteoblast differentiation in the bone marrow. Enhances the osteoclast-supporting ability of stromal cells. Binds with STAT3 the consensus sequence 5'-CTTCTGGGAAGA-3' of the acute phase response element (APRE). Transactivates several promoters including FOS, OSM and PPARG. Recruits a histone deacetylase complex. The chain is Zinc finger protein 467 (Znf467) from Rattus norvegicus (Rat).